Here is a 284-residue protein sequence, read N- to C-terminus: L-ribulose-5-phosphate 3-epimerase UlaE (284 aa).

It belongs to the L-ribulose-5-phosphate 3-epimerase family.

The enzyme catalyses L-ribulose 5-phosphate = L-xylulose 5-phosphate. It functions in the pathway cofactor degradation; L-ascorbate degradation; D-xylulose 5-phosphate from L-ascorbate: step 3/4. In terms of biological role, catalyzes the isomerization of L-xylulose-5-phosphate to L-ribulose-5-phosphate. Is involved in the anaerobic L-ascorbate utilization. In Shigella flexneri, this protein is L-ribulose-5-phosphate 3-epimerase UlaE.